A 149-amino-acid chain; its full sequence is MHCPFCSATDTKVIDSRLVAEGHQVRRRRECTECHERFTTFEGAELVMPRVIKRDGTRQPFDEEKLQAGMLRAVEKRPVSMDEIEQALSKIKSTLRATGEREVPSEMIGNLMMEQLMSLDKVAYIRFASVYRAFEDVSEFGEAIAKLQK.

A zinc finger spans residues 3–34 (CPFCSATDTKVIDSRLVAEGHQVRRRRECTEC). The ATP-cone domain maps to 49–139 (PRVIKRDGTR…VYRAFEDVSE (91 aa)).

This sequence belongs to the NrdR family. Zn(2+) serves as cofactor.

Negatively regulates transcription of bacterial ribonucleotide reductase nrd genes and operons by binding to NrdR-boxes. The sequence is that of Transcriptional repressor NrdR from Shewanella sp. (strain MR-4).